The primary structure comprises 958 residues: MutS protein homolog 4 (958 aa).

Disordered regions lie at residues 51 to 110 (QEAA…SFGN) and 124 to 161 (PVGTSSSSARDTTYPHTFRTPLSAGNPQRSGHKSWTPQ). Residues 91-107 (SSSSSSSPAPASAPGSS) show a composition bias toward low complexity. Composition is skewed to polar residues over residues 124–138 (PVGTSSSSARDTTYP) and 146–161 (SAGNPQRSGHKSWTPQ). 702-709 (GPNMSGKS) is an ATP binding site.

The protein belongs to the DNA mismatch repair MutS family. In terms of assembly, heterooligomer of MSH4 and MSH5. Predominantly expressed in testis.

Its subcellular location is the chromosome. Its function is as follows. Involved in meiotic recombination. Required for reciprocal recombination and proper segregation of homologous chromosomes at meiosis. This chain is MutS protein homolog 4 (Msh4), found in Mus musculus (Mouse).